Reading from the N-terminus, the 206-residue chain is Urease accessory protein UreG (206 aa).

A GTP-binding site is contributed by 12–19 (GPVGSGKT).

The protein belongs to the SIMIBI class G3E GTPase family. UreG subfamily. As to quaternary structure, homodimer. UreD, UreF and UreG form a complex that acts as a GTP-hydrolysis-dependent molecular chaperone, activating the urease apoprotein by helping to assemble the nickel containing metallocenter of UreC. The UreE protein probably delivers the nickel.

The protein resides in the cytoplasm. Functionally, facilitates the functional incorporation of the urease nickel metallocenter. This process requires GTP hydrolysis, probably effectuated by UreG. The protein is Urease accessory protein UreG of Synechocystis sp. (strain ATCC 27184 / PCC 6803 / Kazusa).